The primary structure comprises 450 residues: UDP-N-acetylmuramoylalanine--D-glutamate ligase (450 aa).

119 to 125 (GSNGKTT) serves as a coordination point for ATP.

This sequence belongs to the MurCDEF family.

The protein resides in the cytoplasm. The catalysed reaction is UDP-N-acetyl-alpha-D-muramoyl-L-alanine + D-glutamate + ATP = UDP-N-acetyl-alpha-D-muramoyl-L-alanyl-D-glutamate + ADP + phosphate + H(+). Its pathway is cell wall biogenesis; peptidoglycan biosynthesis. Its function is as follows. Cell wall formation. Catalyzes the addition of glutamate to the nucleotide precursor UDP-N-acetylmuramoyl-L-alanine (UMA). This chain is UDP-N-acetylmuramoylalanine--D-glutamate ligase, found in Streptococcus pneumoniae (strain CGSP14).